The primary structure comprises 208 residues: Thymidylate kinase (208 aa).

10–17 (GPEGSGKS) is a binding site for ATP.

The protein belongs to the thymidylate kinase family.

It catalyses the reaction dTMP + ATP = dTDP + ADP. In terms of biological role, phosphorylation of dTMP to form dTDP in both de novo and salvage pathways of dTTP synthesis. The chain is Thymidylate kinase from Bacillus cytotoxicus (strain DSM 22905 / CIP 110041 / 391-98 / NVH 391-98).